Consider the following 845-residue polypeptide: Putative DEAD-box ATP-dependent RNA helicase 33 (845 aa).

2 disordered regions span residues 129–149 (GHPD…PMSP) and 282–302 (KFRK…NEGK). Over residues 289–298 (STEEDSDEEG) the composition is skewed to acidic residues. A Q motif motif is present at residues 375-403 (KRFDESCISPLTLKALSASGIVKMTRVQD). The Helicase ATP-binding domain maps to 406–590 (LSECLDGKDA…QLVLKRDHSY (185 aa)). Residue 419-426 (AKTGTGKS) participates in ATP binding. The DEAD box signature appears at 538-541 (DEAD). The 155-residue stretch at 624–778 (LLKEHINNMP…QVDQSMAKID (155 aa)) folds into the Helicase C-terminal domain.

Belongs to the DEAD box helicase family.

It carries out the reaction ATP + H2O = ADP + phosphate + H(+). The polypeptide is Putative DEAD-box ATP-dependent RNA helicase 33 (RH33) (Arabidopsis thaliana (Mouse-ear cress)).